Here is a 461-residue protein sequence, read N- to C-terminus: MKAIILAAGLGTRFKSEKHKVLHEMLGKPIIWYVLNYIKQSNIVDIALVVSHKKESIIEALKHENVSFFEQANPKGGTADALLSAKAFFEGMDDYILVTNGDAPLVKPDTIKGMQRFLHMVEEYEKIKVGALVLSSFLPDPTGYGRIVKNGKGDVIKIVEEKEATYEQKQINEVNGGVYMFYVPYLKEAVKHLKPSEKTNELYITDIIEIMTNLGYTCRSFMASEITEIFGVNDRWELSFAESVIKMRILENLARSGVTIHSPESVYIEPDVQVELDAEIFPNVVLKGNTVIHKKAKVMNGSYLENATIKEKATVLPMSYIKNSTVEEEAIVGPMCHIRDNSVVGKGSHVGSFVELKNAKLQENVMAKHLSYLGDVNIGKKTNIGAGTVVANFDGKQKYQSYIGQKAFIGSNSLIIAPRNIGDFAFIAGGSVITKDIPPKALAIERAELKILEDKSKVKDE.

Residues 1–235 are pyrophosphorylase; it reads MKAIILAAGL…ITEIFGVNDR (235 aa). UDP-N-acetyl-alpha-D-glucosamine is bound by residues 6–9, Lys20, Gln71, and 77–78; these read LAAG and GT. Residue Asp102 participates in Mg(2+) binding. The UDP-N-acetyl-alpha-D-glucosamine site is built by Gly145, Glu160, Asn175, and Asn233. Asn233 contributes to the Mg(2+) binding site. The linker stretch occupies residues 236 to 256; that stretch reads WELSFAESVIKMRILENLARS. Positions 257 to 461 are N-acetyltransferase; the sequence is GVTIHSPESV…LEDKSKVKDE (205 aa). Positions 339 and 357 each coordinate UDP-N-acetyl-alpha-D-glucosamine. Catalysis depends on His369, which acts as the Proton acceptor. UDP-N-acetyl-alpha-D-glucosamine contacts are provided by Tyr372 and Asn383. Acetyl-CoA contacts are provided by Ala386, Ser411, Gly429, and Arg446.

It in the N-terminal section; belongs to the N-acetylglucosamine-1-phosphate uridyltransferase family. This sequence in the C-terminal section; belongs to the transferase hexapeptide repeat family. As to quaternary structure, homotrimer. It depends on Mg(2+) as a cofactor.

The protein localises to the cytoplasm. It carries out the reaction alpha-D-glucosamine 1-phosphate + acetyl-CoA = N-acetyl-alpha-D-glucosamine 1-phosphate + CoA + H(+). The catalysed reaction is N-acetyl-alpha-D-glucosamine 1-phosphate + UTP + H(+) = UDP-N-acetyl-alpha-D-glucosamine + diphosphate. It participates in nucleotide-sugar biosynthesis; UDP-N-acetyl-alpha-D-glucosamine biosynthesis; N-acetyl-alpha-D-glucosamine 1-phosphate from alpha-D-glucosamine 6-phosphate (route II): step 2/2. The protein operates within nucleotide-sugar biosynthesis; UDP-N-acetyl-alpha-D-glucosamine biosynthesis; UDP-N-acetyl-alpha-D-glucosamine from N-acetyl-alpha-D-glucosamine 1-phosphate: step 1/1. It functions in the pathway bacterial outer membrane biogenesis; LPS lipid A biosynthesis. Functionally, catalyzes the last two sequential reactions in the de novo biosynthetic pathway for UDP-N-acetylglucosamine (UDP-GlcNAc). The C-terminal domain catalyzes the transfer of acetyl group from acetyl coenzyme A to glucosamine-1-phosphate (GlcN-1-P) to produce N-acetylglucosamine-1-phosphate (GlcNAc-1-P), which is converted into UDP-GlcNAc by the transfer of uridine 5-monophosphate (from uridine 5-triphosphate), a reaction catalyzed by the N-terminal domain. The sequence is that of Bifunctional protein GlmU from Hydrogenobaculum sp. (strain Y04AAS1).